The sequence spans 154 residues: Terephthalate 1,2-dioxygenase, terminal oxygenase component subunit beta 2 (154 aa).

This sequence belongs to the bacterial ring-hydroxylating dioxygenase beta subunit family. As to quaternary structure, heterotetramer composed of 2 alpha (TphA2I and TphA2II) and 2 beta (TphA3I and TphA3II) subunits. Part of a multicomponent enzyme system composed of a reductase (TphA1I or TphA1II) and a two-subunit oxygenase component (TphA2I or TphA2II and TphA3I or TphA3II). Fe cation is required as a cofactor.

The enzyme catalyses terephthalate + NADH + O2 + H(+) = (3S,4R)-3,4-dihydroxycyclohexa-1,5-diene-1,4-dicarboxylate + NAD(+). With respect to regulation, inhibited by EDTA. Functionally, component of the terephthalate 1,2-dioxygenase multicomponent enzyme system which catalyzes the dioxygenation of terephthalate (TER/TPA) to 1,2-dihydroxy-3,5-cyclohexadiene-1,4-dicarboxylic acid (DCD). It can also use 2,5-dicarboxypyridine (PDC) and 1,4-napthalenedicarboxylic acid (NDC) as substrates, and preferentially uses NADPH which is the physiological electron donor. This is Terephthalate 1,2-dioxygenase, terminal oxygenase component subunit beta 2 (tphA3II) from Comamonas sp.